We begin with the raw amino-acid sequence, 436 residues long: Ribulose bisphosphate carboxylase large chain (436 aa).

2 residues coordinate substrate: Asn-104 and Thr-154. Lys-156 functions as the Proton acceptor in the catalytic mechanism. Position 158 (Lys-158) interacts with substrate. Mg(2+) is bound by residues Lys-182, Asp-184, and Glu-185. The residue at position 182 (Lys-182) is an N6-carboxylysine. His-275 serves as the catalytic Proton acceptor. The substrate site is built by Arg-276, His-308, and Ser-360.

The protein belongs to the RuBisCO large chain family. Type I subfamily. Heterohexadecamer of 8 large chains and 8 small chains. Mg(2+) serves as cofactor.

The protein resides in the plastid. Its subcellular location is the chloroplast. The catalysed reaction is 2 (2R)-3-phosphoglycerate + 2 H(+) = D-ribulose 1,5-bisphosphate + CO2 + H2O. The enzyme catalyses D-ribulose 1,5-bisphosphate + O2 = 2-phosphoglycolate + (2R)-3-phosphoglycerate + 2 H(+). In terms of biological role, ruBisCO catalyzes two reactions: the carboxylation of D-ribulose 1,5-bisphosphate, the primary event in carbon dioxide fixation, as well as the oxidative fragmentation of the pentose substrate in the photorespiration process. Both reactions occur simultaneously and in competition at the same active site. The polypeptide is Ribulose bisphosphate carboxylase large chain (Euglena myxocylindracea).